The following is a 245-amino-acid chain: Phycocyanobilin:ferredoxin oxidoreductase (245 aa).

Belongs to the HY2 family.

It catalyses the reaction (2R,3Z)-phycocyanobilin + 4 oxidized [2Fe-2S]-[ferredoxin] = biliverdin IXalpha + 4 reduced [2Fe-2S]-[ferredoxin] + 4 H(+). Functionally, catalyzes the four-electron reduction of biliverdin IX-alpha (2-electron reduction at both the A and D rings); the reaction proceeds via an isolatable 2-electron intermediate, 181,182-dihydrobiliverdin. This Microcystis aeruginosa (strain NIES-843 / IAM M-2473) protein is Phycocyanobilin:ferredoxin oxidoreductase.